The chain runs to 225 residues: Pre-mRNA-splicing factor SPF27 (225 aa).

Positions 138–222 form a coiled coil; it reads SNDNLALMIE…QGDENKENIR (85 aa).

This sequence belongs to the SPF27 family. Component of the pre-catalytic and catalytic spliceosome complexes. Component of the postcatalytic spliceosome P complex.

It localises to the nucleus. Functionally, required for pre-mRNA splicing as component of the activated spliceosome. May have a scaffolding role in the spliceosome assembly as it contacts all other components of the core complex. This chain is Pre-mRNA-splicing factor SPF27 (bcas2), found in Danio rerio (Zebrafish).